The following is a 65-amino-acid chain: Large ribosomal subunit protein bL33 (65 aa).

The segment at valine 20–arginine 40 is disordered.

Belongs to the bacterial ribosomal protein bL33 family.

The sequence is that of Large ribosomal subunit protein bL33 from Prochlorococcus marinus (strain MIT 9211).